Consider the following 415-residue polypeptide: Protein fuzzy homolog (415 aa).

It belongs to the fuzzy family. In terms of assembly, component of the CPLANE (ciliogenesis and planar polarity effectors) complex, composed of INTU, FUZ and WDPCP. Interacts with CPLANE1 and CPLANE2.

Its subcellular location is the cytoplasm. The protein localises to the cytoskeleton. It localises to the cilium basal body. Its function is as follows. Probable planar cell polarity effector involved in cilium biogenesis. Proposed to function as core component of the CPLANE (ciliogenesis and planar polarity effectors) complex involved in the recruitment of peripheral IFT-A proteins to basal bodies. May regulate protein and membrane transport to the cilium. May regulate the morphogenesis of hair follicles which depends on functional primary cilia. Binds phosphatidylinositol 3-phosphate with highest affinity, followed by phosphatidylinositol 4-phosphate and phosphatidylinositol 5-phosphate. This Rattus norvegicus (Rat) protein is Protein fuzzy homolog (Fuz).